Reading from the N-terminus, the 246-residue chain is NLP effector protein Pc118548 (246 aa).

The signal sequence occupies residues 1 to 19 (MNFRAFLLAAIAGIATINA). The short motif at 122–128 (GHRHYWE) is the Hepta-peptide GHRHDWE motif element. Asn-141 carries N-linked (GlcNAc...) asparagine glycosylation.

It belongs to the Necrosis inducing protein (NPP1) family.

It is found in the secreted. Secreted effector that contributes strongly to virulence during infection by P.capsici. Induces cell death in the Solanaceae, including Nicotiana benthamiana and hot pepper. In Phytophthora capsici, this protein is NLP effector protein Pc118548.